The chain runs to 750 residues: Photosystem I P700 chlorophyll a apoprotein A1 (750 aa).

The next 8 helical transmembrane spans lie at 70 to 93 (VFSA…FHGA), 156 to 179 (LYCT…FHYH), 195 to 219 (LNHH…HVSL), 291 to 309 (IAHH…GHMY), 346 to 369 (WHAQ…HHMY), 385 to 411 (LSLF…IFMV), 433 to 455 (AIIS…LYIH), and 531 to 549 (FLVH…LILL). [4Fe-4S] cluster is bound by residues Cys573 and Cys582. The next 2 helical transmembrane spans lie at 589 to 610 (HVFL…HFSW) and 664 to 686 (LSAY…MFLF). Position 675 (His675) interacts with chlorophyll a'. Residues Met683 and Tyr691 each contribute to the chlorophyll a site. Residue Trp692 coordinates phylloquinone. A helical transmembrane segment spans residues 724 to 744 (AVGVTHYLLGGIATTWAFFLA).

Belongs to the PsaA/PsaB family. In terms of assembly, the PsaA/B heterodimer binds the P700 chlorophyll special pair and subsequent electron acceptors. PSI consists of a core antenna complex that captures photons, and an electron transfer chain that converts photonic excitation into a charge separation. The eukaryotic PSI reaction center is composed of at least 11 subunits. It depends on P700 is a chlorophyll a/chlorophyll a' dimer, A0 is one or more chlorophyll a, A1 is one or both phylloquinones and FX is a shared 4Fe-4S iron-sulfur center. as a cofactor.

The protein localises to the plastid. Its subcellular location is the chloroplast thylakoid membrane. The enzyme catalyses reduced [plastocyanin] + hnu + oxidized [2Fe-2S]-[ferredoxin] = oxidized [plastocyanin] + reduced [2Fe-2S]-[ferredoxin]. PsaA and PsaB bind P700, the primary electron donor of photosystem I (PSI), as well as the electron acceptors A0, A1 and FX. PSI is a plastocyanin-ferredoxin oxidoreductase, converting photonic excitation into a charge separation, which transfers an electron from the donor P700 chlorophyll pair to the spectroscopically characterized acceptors A0, A1, FX, FA and FB in turn. Oxidized P700 is reduced on the lumenal side of the thylakoid membrane by plastocyanin. This chain is Photosystem I P700 chlorophyll a apoprotein A1, found in Drimys granadensis.